A 352-amino-acid polypeptide reads, in one-letter code: DNA polymerase IV (352 aa).

The UmuC domain maps to 4–185 (IIHVDMDCFF…LPLSKIPGVG (182 aa)). Mg(2+) is bound by residues Asp8 and Asp103. Glu104 is a catalytic residue.

The protein belongs to the DNA polymerase type-Y family. As to quaternary structure, monomer. It depends on Mg(2+) as a cofactor.

The protein localises to the cytoplasm. The catalysed reaction is DNA(n) + a 2'-deoxyribonucleoside 5'-triphosphate = DNA(n+1) + diphosphate. Poorly processive, error-prone DNA polymerase involved in untargeted mutagenesis. Copies undamaged DNA at stalled replication forks, which arise in vivo from mismatched or misaligned primer ends. These misaligned primers can be extended by PolIV. Exhibits no 3'-5' exonuclease (proofreading) activity. May be involved in translesional synthesis, in conjunction with the beta clamp from PolIII. This is DNA polymerase IV from Enterobacter sp. (strain 638).